The following is a 558-amino-acid chain: Glucose-6-phosphate isomerase (558 aa).

Lys-12 carries the post-translational modification N6-acetyllysine. Phosphoserine is present on residues Ser-86 and Ser-107. Position 142 is an N6-acetyllysine (Lys-142). A D-glucose 6-phosphate-binding site is contributed by 159–160 (GS). Position 185 is a phosphoserine; by CK2 (Ser-185). D-glucose 6-phosphate is bound at residue 210–215 (SKTFTT). At Thr-250 the chain carries Phosphothreonine. 3 residues coordinate D-glucose 6-phosphate: Gln-354, Glu-358, and His-389. The active-site Proton donor is the Glu-358. The active site involves His-389. Position 454 is an N6-acetyllysine; alternate (Lys-454). The residue at position 454 (Lys-454) is an N6-malonyllysine; alternate. N6-succinyllysine; alternate is present on Lys-454. Ser-455 bears the Phosphoserine mark. Residue Lys-519 coordinates D-glucose 6-phosphate. Residue Lys-519 is part of the active site.

Belongs to the GPI family. Homodimer; in the catalytically active form. Monomer in the secreted form. Post-translationally, phosphorylation at Ser-185 by CK2 has been shown to decrease enzymatic activity and may contribute to secretion by a non-classical secretory pathway. In terms of processing, ISGylated.

Its subcellular location is the cytoplasm. The protein resides in the secreted. It carries out the reaction alpha-D-glucose 6-phosphate = beta-D-fructose 6-phosphate. Its pathway is carbohydrate degradation; glycolysis; D-glyceraldehyde 3-phosphate and glycerone phosphate from D-glucose: step 2/4. Functionally, in the cytoplasm, catalyzes the conversion of glucose-6-phosphate to fructose-6-phosphate, the second step in glycolysis, and the reverse reaction during gluconeogenesis. Besides it's role as a glycolytic enzyme, also acts as a secreted cytokine: acts as an angiogenic factor (AMF) that stimulates endothelial cell motility. Acts as a neurotrophic factor, neuroleukin, for spinal and sensory neurons. It is secreted by lectin-stimulated T-cells and induces immunoglobulin secretion. This chain is Glucose-6-phosphate isomerase, found in Cricetulus griseus (Chinese hamster).